A 354-amino-acid chain; its full sequence is Deubiquitination-protection protein dph1 (354 aa).

The region spanning 1–78 (MTNISLTIKA…SIHLVKTLGQ (78 aa)) is the Ubiquitin-like domain. The region spanning 309–353 (PPEERYAEQLSQLNEMGFVDFERNVQALRRSGGNVQGAIESLLSD) is the UBA domain.

Functionally, protects ubiquitin chains against dissambly by deubiquitinating enzymes thereby promoting protein degradation. The polypeptide is Deubiquitination-protection protein dph1 (dph1) (Schizosaccharomyces pombe (strain 972 / ATCC 24843) (Fission yeast)).